A 55-amino-acid polypeptide reads, in one-letter code: ATP synthase F(0) complex subunit 8 (55 aa).

A helical membrane pass occupies residues 10–32 (FFTMLTTWLTFLLLIQPKLLSFI).

The protein belongs to the ATPase protein 8 family. Component of the ATP synthase complex composed at least of ATP5F1A/subunit alpha, ATP5F1B/subunit beta, ATP5MC1/subunit c (homooctomer), MT-ATP6/subunit a, MT-ATP8/subunit 8, ATP5ME/subunit e, ATP5MF/subunit f, ATP5MG/subunit g, ATP5MK/subunit k, ATP5MJ/subunit j, ATP5F1C/subunit gamma, ATP5F1D/subunit delta, ATP5F1E/subunit epsilon, ATP5PF/subunit F6, ATP5PB/subunit b, ATP5PD/subunit d, ATP5PO/subunit OSCP. ATP synthase complex consists of a soluble F(1) head domain (subunits alpha(3) and beta(3)) - the catalytic core - and a membrane F(0) domain - the membrane proton channel (subunits c, a, 8, e, f, g, k and j). These two domains are linked by a central stalk (subunits gamma, delta, and epsilon) rotating inside the F1 region and a stationary peripheral stalk (subunits F6, b, d, and OSCP).

It localises to the mitochondrion membrane. Functionally, subunit 8, of the mitochondrial membrane ATP synthase complex (F(1)F(0) ATP synthase or Complex V) that produces ATP from ADP in the presence of a proton gradient across the membrane which is generated by electron transport complexes of the respiratory chain. ATP synthase complex consist of a soluble F(1) head domain - the catalytic core - and a membrane F(1) domain - the membrane proton channel. These two domains are linked by a central stalk rotating inside the F(1) region and a stationary peripheral stalk. During catalysis, ATP synthesis in the catalytic domain of F(1) is coupled via a rotary mechanism of the central stalk subunits to proton translocation. In vivo, can only synthesize ATP although its ATP hydrolase activity can be activated artificially in vitro. Part of the complex F(0) domain. The polypeptide is ATP synthase F(0) complex subunit 8 (Guira guira (Guira cuckoo)).